Consider the following 251-residue polypeptide: UstYa family oxidase phomYb (251 aa).

The segment at 1 to 47 (MDGYSSKKPRSASPSRSSLTEVEEEERDTLLKTVSLEEEDKSGENGP) is disordered. Residues 58 to 78 (AIGILMLSNIAFIAAFLTVFV) traverse the membrane as a helical segment. Residue asparagine 135 is glycosylated (N-linked (GlcNAc...) asparagine). Short sequence motifs (HXXHC) lie at residues 160–164 (HQLHC) and 187–191 (HVSHC).

It belongs to the ustYa family.

The protein localises to the membrane. The protein operates within mycotoxin biosynthesis. Its function is as follows. UstYa family oxidase; part of the gene cluster that mediates the biosynthesis of the phomopsins, a group of hexapeptide mycotoxins which infects lupins and causes lupinosis disease in livestock. Within the pathway, phomYb is probably involved in the construction of the macrocyclic structure of the phomopsins. The pathway starts with the processing of the precursor phomA by several endopeptidases including kexin proteases as well as the cluster-specific S41 family peptidase phomP1 and the oligopeptidase phomG to produce 10 identical copies of the hexapeptide Tyr-Val-Ile-Pro-Ile-Asp. After being excised from the precursor peptide, the core peptides are cyclized and modified post-translationally by enzymes encoded within the gene cluster. The timing and order of proteolysis of the phomA precursor and PTMs are still unknown. Two tyrosinase-like enzymes, phomQ1 and phomQ2, catalyze the chlorination and hydroxylation of Tyr, respectively. PhomYb, is proposed to be involved in the construction of the macrocyclic structure. The other 4 ustYa family proteins may be involved in PTMs that generate the unique structure of phomopsin A. PhomYa is required for the hydroxylation of C-beta of Tyr. PhomYc, phomYd, and phomYe are responsible for the biosynthesis of 2,3-dehydroisoleucine (dIle), 2,3-dehydroaspartic acid (dAsp), and 3,4-dehydroproline (dPro), respectively. While dIle formation by phomYc is indispensable for the installation of dAsp by phomYd, the order of the other PTMs have not been elucidated yet. Most of the biosynthetic enzymes likely have broad substrate specificity, and thus, there might be a metabolic grid from a precursor to phomopsin A. The enzyme(s) responsible for the biosynthesis of 3,4-dehydrovaline (dVal) have also not been identified yet. Finally, phomM acts as an S-adenosylmethionine-dependent alpha-N-methyltransferase that catalyzes two successive N-methylation reactions, converting N-desmethyl-phomopsin A to phomopsin A and phomopsin A further to an N,N-dimethylated congener called phomopsin E. The protein is UstYa family oxidase phomYb of Diaporthe leptostromiformis (Lupinosis disease fungus).